The primary structure comprises 501 residues: NAD(P)H-quinone oxidoreductase chain 4, chloroplastic (501 aa).

14 helical membrane-spanning segments follow: residues 4–24, 35–55, 87–107, 113–133, 134–154, 167–187, 211–231, 242–262, 274–294, 310–330, 331–351, 386–406, 416–436, and 464–484; these read FPWL…IPFF, YTLG…CYYF, IGLI…AWPV, LFYF…ASQD, ILLF…LLCI, FILY…TMGF, IILY…FPLH, HYST…YGLI, SIFA…AALI, ISHM…GLNG, AILQ…LAGI, LALP…GIVV, ILVT…LLSM, and IFIL…PNSV.

This sequence belongs to the complex I subunit 4 family.

The protein resides in the plastid. The protein localises to the chloroplast thylakoid membrane. It catalyses the reaction a plastoquinone + NADH + (n+1) H(+)(in) = a plastoquinol + NAD(+) + n H(+)(out). The catalysed reaction is a plastoquinone + NADPH + (n+1) H(+)(in) = a plastoquinol + NADP(+) + n H(+)(out). The protein is NAD(P)H-quinone oxidoreductase chain 4, chloroplastic of Physcomitrium patens (Spreading-leaved earth moss).